A 253-amino-acid polypeptide reads, in one-letter code: Sporulation initiation inhibitor protein Soj (253 aa).

The ATP site is built by Lys11, Gly12, Gly13, Val14, Gly15, Lys16, Thr17, Thr18, Pro214, and Asn216. Residue Thr17 participates in Mg(2+) binding.

Belongs to the ParA family. Dimerizes in the presence of ATP but not ADP; ATP-binding is required for double-stranded (ds)DNA-binding. Interacts with DnaA.

The protein localises to the cytoplasm. It catalyses the reaction ATP + H2O = ADP + phosphate + H(+). Functionally, acts as a spatially regulated molecular switch, capable of either inhibiting or activating the ability of DnaA to initiate DNA replication. Monomeric ADP-Soj inhibits oligomerization of DnaA on single-stranded (ss)- or double-stranded (ds)DNA, thus inhibiting DNA replication initiation; does not disassemble premade DnaA-DNA filaments. Decreases the residence time of DnaA on the chromosome at its binding sites (oriC, replication forks and (probably) promoter-binding sites). Soj forms nucleoprotein filaments in an ATP- and DNA-dependent manner. Inhibits the initiation of sporulation, Spo0J antagonizes this inhibition. Soj ultimately inhibits the activation (phosphorylation) of Spo0A. The protein is Sporulation initiation inhibitor protein Soj of Bacillus subtilis (strain 168).